The following is a 176-amino-acid chain: MKIIAKKDLFINDEIRVREVRLVGLEGEQLGIKPLSEAQAIADDANVDLVLIQPQATPPVAKIMDYGKFKFEYQKKQKEQRKKQSVVTVKEVRLSPVIDKGDFETKLRNGRKFLEKGNKVKVSIRFKGRMITHKEIGAKVLAEFAEATQDIAIIEQRAKMDGRQMFMQLAPIPDKK.

Belongs to the IF-3 family. As to quaternary structure, monomer.

Its subcellular location is the cytoplasm. Its function is as follows. IF-3 binds to the 30S ribosomal subunit and shifts the equilibrium between 70S ribosomes and their 50S and 30S subunits in favor of the free subunits, thus enhancing the availability of 30S subunits on which protein synthesis initiation begins. The protein is Translation initiation factor IF-3 of Streptococcus agalactiae serotype Ia (strain ATCC 27591 / A909 / CDC SS700).